A 367-amino-acid chain; its full sequence is Probable butyrate kinase (367 aa).

This sequence belongs to the acetokinase family.

It is found in the cytoplasm. It catalyses the reaction butanoate + ATP = butanoyl phosphate + ADP. This is Probable butyrate kinase from Bacillus cytotoxicus (strain DSM 22905 / CIP 110041 / 391-98 / NVH 391-98).